We begin with the raw amino-acid sequence, 634 residues long: 1-deoxy-D-xylulose-5-phosphate synthase (634 aa).

Thiamine diphosphate-binding positions include His74 and 115–117 (AHS). Asp146 contacts Mg(2+). Thiamine diphosphate-binding positions include 147–148 (GA), Asn176, Tyr283, and Glu365. Asn176 contacts Mg(2+).

Belongs to the transketolase family. DXPS subfamily. Homodimer. Requires Mg(2+) as cofactor. It depends on thiamine diphosphate as a cofactor.

The catalysed reaction is D-glyceraldehyde 3-phosphate + pyruvate + H(+) = 1-deoxy-D-xylulose 5-phosphate + CO2. It functions in the pathway metabolic intermediate biosynthesis; 1-deoxy-D-xylulose 5-phosphate biosynthesis; 1-deoxy-D-xylulose 5-phosphate from D-glyceraldehyde 3-phosphate and pyruvate: step 1/1. Its function is as follows. Catalyzes the acyloin condensation reaction between C atoms 2 and 3 of pyruvate and glyceraldehyde 3-phosphate to yield 1-deoxy-D-xylulose-5-phosphate (DXP). This is 1-deoxy-D-xylulose-5-phosphate synthase from Burkholderia thailandensis (strain ATCC 700388 / DSM 13276 / CCUG 48851 / CIP 106301 / E264).